Reading from the N-terminus, the 322-residue chain is DNA primase small subunit PriS (322 aa).

Residues aspartate 100, aspartate 102, and aspartate 228 contribute to the active site.

The protein belongs to the eukaryotic-type primase small subunit family. Heterodimer of a small subunit (PriS) and a large subunit (PriL). Mg(2+) is required as a cofactor. The cofactor is Mn(2+).

In terms of biological role, catalytic subunit of DNA primase, an RNA polymerase that catalyzes the synthesis of short RNA molecules used as primers for DNA polymerase during DNA replication. The small subunit contains the primase catalytic core and has DNA synthesis activity on its own. Binding to the large subunit stabilizes and modulates the activity, increasing the rate of DNA synthesis while decreasing the length of the DNA fragments, and conferring RNA synthesis capability. The DNA polymerase activity may enable DNA primase to also catalyze primer extension after primer synthesis. May also play a role in DNA repair. The protein is DNA primase small subunit PriS of Sulfolobus acidocaldarius (strain ATCC 33909 / DSM 639 / JCM 8929 / NBRC 15157 / NCIMB 11770).